The primary structure comprises 394 residues: S-adenosylmethionine synthase (394 aa).

ATP is bound at residue histidine 18. Aspartate 20 is a Mg(2+) binding site. Glutamate 46 contributes to the K(+) binding site. Residues glutamate 59 and glutamine 102 each coordinate L-methionine. The flexible loop stretch occupies residues 102 to 112 (QSPDIDMGVSA). Residues 175–177 (DGK), aspartate 250, 256–257 (RK), alanine 273, and lysine 277 contribute to the ATP site. Aspartate 250 provides a ligand contact to L-methionine. An L-methionine-binding site is contributed by lysine 281.

The protein belongs to the AdoMet synthase family. Homotetramer; dimer of dimers. It depends on Mg(2+) as a cofactor. K(+) serves as cofactor.

Its subcellular location is the cytoplasm. The catalysed reaction is L-methionine + ATP + H2O = S-adenosyl-L-methionine + phosphate + diphosphate. The protein operates within amino-acid biosynthesis; S-adenosyl-L-methionine biosynthesis; S-adenosyl-L-methionine from L-methionine: step 1/1. Catalyzes the formation of S-adenosylmethionine (AdoMet) from methionine and ATP. The overall synthetic reaction is composed of two sequential steps, AdoMet formation and the subsequent tripolyphosphate hydrolysis which occurs prior to release of AdoMet from the enzyme. This Brachyspira hyodysenteriae (strain ATCC 49526 / WA1) protein is S-adenosylmethionine synthase.